We begin with the raw amino-acid sequence, 504 residues long: MTQAILELNGIEKAFPGVKALDGACLNVYPGKVMALMGENGAGKSTLMKSLTGIYAMDAGEIRYEGKAVNFNGPKHSQESGISIIHQELNLIPELTIAENIFLGREKTNAFGGIKWSEMYKDADALLKRLNVKHHSRQLLGELSLGEQQMVEIAKALSFKSKVIIMDEPTDALTDTETESLFKVINELRDEGCGIVYISHRLKEIFEICDDITVLRDGKFIGERVVADIDEDTLIEMMVGRRLDEQYPRIDVQHGEKSLELFDVSGPGVHNVSFSLDRGEILGISGLMGAGRTELMKIIYGALPMTCGAIKLNNKMINPISPRDGLANGIAYISEDRKGDGLVLGLSVKENMSICSLDQLSKGIQLDHHAEVTAVEDFIRLFNIKTPTRDQIIGNLSGGNQQKVAIAKGLMTRPKVLILDEPTRGVDVGAKKEIYQLINQFKAEGMSIILVSSEMPEVLGMSDRILVMHEGRISGEFMAKDADQEKLLACAVGKTVEQNVEVTA.

ABC transporter domains follow at residues L6–R242 and I250–T495. ATP is bound at residue G38–S45.

The protein belongs to the ABC transporter superfamily. Ribose importer (TC 3.A.1.2.1) family. As to quaternary structure, the complex is composed of an ATP-binding protein (RbsA), two transmembrane proteins (RbsC) and a solute-binding protein (RbsB).

The protein localises to the cell inner membrane. It catalyses the reaction D-ribose(out) + ATP + H2O = D-ribose(in) + ADP + phosphate + H(+). In terms of biological role, part of the ABC transporter complex RbsABC involved in ribose import. Responsible for energy coupling to the transport system. The sequence is that of Ribose import ATP-binding protein RbsA from Aliivibrio fischeri (strain ATCC 700601 / ES114) (Vibrio fischeri).